The following is a 305-amino-acid chain: Glycine--tRNA ligase alpha subunit (305 aa).

Belongs to the class-II aminoacyl-tRNA synthetase family. Tetramer of two alpha and two beta subunits.

The protein resides in the cytoplasm. It catalyses the reaction tRNA(Gly) + glycine + ATP = glycyl-tRNA(Gly) + AMP + diphosphate. The polypeptide is Glycine--tRNA ligase alpha subunit (Heliobacterium modesticaldum (strain ATCC 51547 / Ice1)).